Consider the following 345-residue polypeptide: Isocitrate/homoisocitrate dehydrogenase (345 aa).

69-71 (TTT) contacts NADH. The (2R,3S)-homoisocitrate site is built by Arg-86, Arg-96, Arg-111, Tyr-118, Lys-163, and Asn-165. Asn-165 contributes to the NADH binding site. The Mg(2+) site is built by Asp-194, Asp-218, and Asp-222. Residues 251–255 (GSAPD) and Asn-263 contribute to the NADH site.

It belongs to the isocitrate and isopropylmalate dehydrogenases family. It depends on Mn(2+) as a cofactor. Mg(2+) is required as a cofactor.

It carries out the reaction D-threo-isocitrate + NAD(+) = 2-oxoglutarate + CO2 + NADH. The catalysed reaction is (2R,3S)-homoisocitrate + NAD(+) = 2-oxoadipate + CO2 + NADH. Its pathway is amino-acid biosynthesis; L-lysine biosynthesis via AAA pathway; L-alpha-aminoadipate from 2-oxoglutarate: step 4/5. Its function is as follows. Catalyzes the NAD(+)-dependent oxidative decarboxylation of homoisocitrate to 2-oxoadipate (alpha-ketoadipate), and of isocitrate to 2-oxoglutarate, at near equal efficiency. May thus play a dual role in glutamate and lysine biosynthesis in vivo. Preferentially uses NAD over NADP. The polypeptide is Isocitrate/homoisocitrate dehydrogenase (Pyrococcus horikoshii (strain ATCC 700860 / DSM 12428 / JCM 9974 / NBRC 100139 / OT-3)).